The following is a 705-amino-acid chain: Methionine--tRNA ligase (705 aa).

A 'HIGH' region motif is present at residues 17-27 (PYANGPVHLGH). Residues Cys149, Cys152, Cys162, and Cys165 each contribute to the Zn(2+) site. The 'KMSKS' region motif lies at 347–351 (KFSKS). ATP is bound at residue Lys350. Residues 604–705 (EFQKVDLRVA…GEGINGQSVQ (102 aa)) enclose the tRNA-binding domain.

It belongs to the class-I aminoacyl-tRNA synthetase family. MetG type 1 subfamily. As to quaternary structure, homodimer. Zn(2+) is required as a cofactor.

It is found in the cytoplasm. It catalyses the reaction tRNA(Met) + L-methionine + ATP = L-methionyl-tRNA(Met) + AMP + diphosphate. Functionally, is required not only for elongation of protein synthesis but also for the initiation of all mRNA translation through initiator tRNA(fMet) aminoacylation. The polypeptide is Methionine--tRNA ligase (Chlorobium chlorochromatii (strain CaD3)).